A 490-amino-acid polypeptide reads, in one-letter code: Actin-related protein 6 (490 aa).

This sequence belongs to the actin family. ARP6 subfamily.

Its subcellular location is the cytoplasm. The protein localises to the cytoskeleton. This Dictyostelium discoideum (Social amoeba) protein is Actin-related protein 6.